The sequence spans 247 residues: 2,3-bisphosphoglycerate-dependent phosphoglycerate mutase (247 aa).

Substrate contacts are provided by residues 8 to 15 (RHGESQWN), 21 to 22 (TG), arginine 60, 87 to 90 (ERHY), lysine 98, 114 to 115 (RR), and 183 to 184 (GN). Histidine 9 serves as the catalytic Tele-phosphohistidine intermediate. Catalysis depends on glutamate 87, which acts as the Proton donor/acceptor.

It belongs to the phosphoglycerate mutase family. BPG-dependent PGAM subfamily.

It carries out the reaction (2R)-2-phosphoglycerate = (2R)-3-phosphoglycerate. Its pathway is carbohydrate degradation; glycolysis; pyruvate from D-glyceraldehyde 3-phosphate: step 3/5. Catalyzes the interconversion of 2-phosphoglycerate and 3-phosphoglycerate. The polypeptide is 2,3-bisphosphoglycerate-dependent phosphoglycerate mutase (Chlorobium limicola (strain DSM 245 / NBRC 103803 / 6330)).